The chain runs to 473 residues: Cysteine--tRNA ligase (473 aa).

Residue cysteine 28 coordinates Zn(2+). Residues 30–40 (PTVYNMPHIGN) carry the 'HIGH' region motif. Residues cysteine 213, histidine 238, and glutamate 242 each coordinate Zn(2+). The 'KMSKS' region signature appears at 270 to 274 (KMSKS). Position 273 (lysine 273) interacts with ATP.

Belongs to the class-I aminoacyl-tRNA synthetase family. It depends on Zn(2+) as a cofactor.

It localises to the cytoplasm. It catalyses the reaction tRNA(Cys) + L-cysteine + ATP = L-cysteinyl-tRNA(Cys) + AMP + diphosphate. This Methanosarcina acetivorans (strain ATCC 35395 / DSM 2834 / JCM 12185 / C2A) protein is Cysteine--tRNA ligase.